We begin with the raw amino-acid sequence, 473 residues long: Putative F-box/LRR-repeat protein At3g59170 (473 aa).

The F-box domain occupies 6–54 (KDMINVLPDALLCHILSFLTTKEAASTSLLSRRWRYLLAFVPNLEFDDS). LRR repeat units follow at residues 168 to 194 (TIKIRDGPFIDVKHVHLPKLKTLYLQS), 196 to 221 (MFDENDIGFRKLLSGCPVLEELVLDG), 229 to 254 (SFTVSVATLKRLTFCCQKMSSFGYMH), 333 to 364 (VLYLSPETLEVLTYCCKQIPIFENLSHLTIKS), and 365 to 390 (DPNVGWKPLTKLLKNSPKLETLVFQG).

The protein is Putative F-box/LRR-repeat protein At3g59170 of Arabidopsis thaliana (Mouse-ear cress).